A 242-amino-acid chain; its full sequence is Pyridoxine 5'-phosphate synthase (242 aa).

Residue asparagine 6 participates in 3-amino-2-oxopropyl phosphate binding. 1-deoxy-D-xylulose 5-phosphate is bound at residue 8–9 (DH). Arginine 17 provides a ligand contact to 3-amino-2-oxopropyl phosphate. Histidine 42 acts as the Proton acceptor in catalysis. Positions 44 and 49 each coordinate 1-deoxy-D-xylulose 5-phosphate. Glutamate 69 acts as the Proton acceptor in catalysis. 1-deoxy-D-xylulose 5-phosphate is bound at residue threonine 99. The Proton donor role is filled by histidine 190. Residues glycine 191 and 212–213 (GH) contribute to the 3-amino-2-oxopropyl phosphate site.

Belongs to the PNP synthase family. In terms of assembly, homooctamer; tetramer of dimers.

It is found in the cytoplasm. It carries out the reaction 3-amino-2-oxopropyl phosphate + 1-deoxy-D-xylulose 5-phosphate = pyridoxine 5'-phosphate + phosphate + 2 H2O + H(+). Its pathway is cofactor biosynthesis; pyridoxine 5'-phosphate biosynthesis; pyridoxine 5'-phosphate from D-erythrose 4-phosphate: step 5/5. Catalyzes the complicated ring closure reaction between the two acyclic compounds 1-deoxy-D-xylulose-5-phosphate (DXP) and 3-amino-2-oxopropyl phosphate (1-amino-acetone-3-phosphate or AAP) to form pyridoxine 5'-phosphate (PNP) and inorganic phosphate. This chain is Pyridoxine 5'-phosphate synthase, found in Neisseria meningitidis serogroup B (strain ATCC BAA-335 / MC58).